The primary structure comprises 221 residues: GTP-binding nuclear protein Ran2 (221 aa).

The 165-residue stretch at 10-174 (DYPSFKLVIV…LYLARKLAGD (165 aa)) folds into the Small GTPase Ran-type domain. GTP is bound at residue 21 to 28 (DGGTGKTT). Residues 40-48 (KKYEPTIGV) are switch-I. GTP is bound by residues G71, 125-128 (NKVD), and 153-155 (SAK). A switch-II region spans residues 71-87 (GQEKFGGLRDGYYIHGQ).

It belongs to the small GTPase superfamily. Ran family. As to quaternary structure, found in a nuclear export complex with RanGTP, exportin and pre-miRNA.

The protein resides in the nucleus. Functionally, GTP-binding protein involved in nucleocytoplasmic transport. Required for the import of protein into the nucleus and also for RNA export. Involved in chromatin condensation and control of cell cycle. The polypeptide is GTP-binding nuclear protein Ran2 (RAN2) (Solanum lycopersicum (Tomato)).